The primary structure comprises 406 residues: Nicotinate phosphoribosyltransferase (406 aa).

His-225 bears the Phosphohistidine; by autocatalysis mark.

The protein belongs to the NAPRTase family. In terms of processing, transiently phosphorylated on a His residue during the reaction cycle. Phosphorylation strongly increases the affinity for substrates and increases the rate of nicotinate D-ribonucleotide production. Dephosphorylation regenerates the low-affinity form of the enzyme, leading to product release.

It catalyses the reaction nicotinate + 5-phospho-alpha-D-ribose 1-diphosphate + ATP + H2O = nicotinate beta-D-ribonucleotide + ADP + phosphate + diphosphate. Its pathway is cofactor biosynthesis; NAD(+) biosynthesis; nicotinate D-ribonucleotide from nicotinate: step 1/1. Functionally, catalyzes the synthesis of beta-nicotinate D-ribonucleotide from nicotinate and 5-phospho-D-ribose 1-phosphate at the expense of ATP. The sequence is that of Nicotinate phosphoribosyltransferase from Psychromonas ingrahamii (strain DSM 17664 / CCUG 51855 / 37).